The chain runs to 632 residues: Extracellular metalloproteinase 1 (632 aa).

A signal peptide spans M1 to A19. Positions H20 to F246 are excised as a propeptide. N284 carries an N-linked (GlcNAc...) asparagine glycan. T430 contacts Zn(2+). H431 is a catalytic residue. S434 serves as a coordination point for Zn(2+). A glycan (N-linked (GlcNAc...) asparagine) is linked at N591.

This sequence belongs to the peptidase M36 family. The cofactor is Zn(2+).

The protein resides in the secreted. Its activity is regulated as follows. PMSF, soybean trypsin inhibitor (SBTI) and chymostatin strongly inhibit the proteinase. Functionally, secreted metalloproteinase probably acting as a virulence factor. The polypeptide is Extracellular metalloproteinase 1 (MEP1) (Arthroderma otae (Microsporum canis)).